Reading from the N-terminus, the 220-residue chain is Glutamine amidotransferase-like class 1 domain-containing protein 1 (220 aa).

The signal sequence occupies residues 1–38 (MASERLPNRPACLLVASGAAEGVSAQSFLHCFTMASTA). A glycan (N-linked (GlcNAc...) asparagine) is linked at asparagine 201.

The protein belongs to the peptidase C56 family. As to quaternary structure, homotetramer. Component of the FERRY complex composed of five subunits, TBCK, PPP1R21, FERRY3, CRYZL1 and GATD1 with a ratio of 1:2:1:2:4, respectively.

It localises to the secreted. The protein localises to the early endosome. Functionally, component of the FERRY complex (Five-subunit Endosomal Rab5 and RNA/ribosome intermediary). The FERRY complex directly interacts with mRNAs and RAB5A, and functions as a RAB5A effector involved in the localization and the distribution of specific mRNAs most likely by mediating their endosomal transport. The complex recruits mRNAs and ribosomes to early endosomes through direct mRNA-interaction. This chain is Glutamine amidotransferase-like class 1 domain-containing protein 1, found in Homo sapiens (Human).